We begin with the raw amino-acid sequence, 152 residues long: UPF0178 protein Plav_1521 (152 aa).

Positions 114 to 152 are disordered; that stretch reads LRETGQSKGGGPAFSKEDRSRFLRSLEDTVQAIRRRPPP. The span at 128-140 shows a compositional bias: basic and acidic residues; sequence SKEDRSRFLRSLE.

Belongs to the UPF0178 family.

This Parvibaculum lavamentivorans (strain DS-1 / DSM 13023 / NCIMB 13966) protein is UPF0178 protein Plav_1521.